Reading from the N-terminus, the 117-residue chain is Large ribosomal subunit protein bL19 (117 aa).

Belongs to the bacterial ribosomal protein bL19 family.

This protein is located at the 30S-50S ribosomal subunit interface and may play a role in the structure and function of the aminoacyl-tRNA binding site. This Halorhodospira halophila (strain DSM 244 / SL1) (Ectothiorhodospira halophila (strain DSM 244 / SL1)) protein is Large ribosomal subunit protein bL19.